The chain runs to 475 residues: Aspartyl/glutamyl-tRNA(Asn/Gln) amidotransferase subunit B (475 aa).

Belongs to the GatB/GatE family. GatB subfamily. In terms of assembly, heterotrimer of A, B and C subunits.

It catalyses the reaction L-glutamyl-tRNA(Gln) + L-glutamine + ATP + H2O = L-glutaminyl-tRNA(Gln) + L-glutamate + ADP + phosphate + H(+). It carries out the reaction L-aspartyl-tRNA(Asn) + L-glutamine + ATP + H2O = L-asparaginyl-tRNA(Asn) + L-glutamate + ADP + phosphate + 2 H(+). Its function is as follows. Allows the formation of correctly charged Asn-tRNA(Asn) or Gln-tRNA(Gln) through the transamidation of misacylated Asp-tRNA(Asn) or Glu-tRNA(Gln) in organisms which lack either or both of asparaginyl-tRNA or glutaminyl-tRNA synthetases. The reaction takes place in the presence of glutamine and ATP through an activated phospho-Asp-tRNA(Asn) or phospho-Glu-tRNA(Gln). The chain is Aspartyl/glutamyl-tRNA(Asn/Gln) amidotransferase subunit B from Agathobacter rectalis (strain ATCC 33656 / DSM 3377 / JCM 17463 / KCTC 5835 / VPI 0990) (Eubacterium rectale).